The following is a 411-amino-acid chain: Keratin, type I cytoskeletal 12 (411 aa).

The segment at Asp-1 to Ser-42 is head. Positions Glu-43 to Trp-78 are coil 1A. Positions Glu-43 to Asp-359 constitute an IF rod domain. Residues Gly-83–Leu-101 are linker 1. Residues Ile-102 to Cys-193 are coil 1B. The interval Arg-194–Leu-216 is linker 12. Residues Leu-217 to Gly-354 are coil 2. The tract at residues Glu-355–Asn-411 is tail. Positions Ala-356 to Arg-387 are disordered. Positions Ser-365–Asp-378 are enriched in polar residues.

This sequence belongs to the intermediate filament family. As to quaternary structure, heterotetramer of two type I and two type II keratins. Keratin-3 associates with keratin-12. As to expression, cornea specific. Associated mainly with all layers of the central corneal epithelium and also found in the suprabasal limbal epithelium.

Its function is as follows. Involved in corneal epithelium organization, integrity and corneal keratin expression. The polypeptide is Keratin, type I cytoskeletal 12 (KRT12) (Oryctolagus cuniculus (Rabbit)).